The primary structure comprises 67 residues: Phycobilisome 7.8 kDa linker polypeptide, allophycocyanin-associated, core (67 aa).

A CpcD-like domain is found at 1–56 (GRLFKITACVPSQTRIRTQRELQNTYFTKLVPYENWFREQQRIQKMGGKIVKVELA).

The protein belongs to the phycobilisome linker protein family.

It localises to the cellular thylakoid membrane. In terms of biological role, rod linker protein, associated with allophycocyanin. Linker polypeptides determine the state of aggregation and the location of the disk-shaped phycobiliprotein units within the phycobilisome and modulate their spectroscopic properties in order to mediate a directed and optimal energy transfer. This Mastigocladus laminosus (Fischerella sp.) protein is Phycobilisome 7.8 kDa linker polypeptide, allophycocyanin-associated, core (apcC).